We begin with the raw amino-acid sequence, 2549 residues long: Serine/threonine-protein kinase mTOR (2549 aa).

M1 bears the N-acetylmethionine mark. The interval 1–651 (MLGTGPATAT…HVVSQTAVQV (651 aa)) is interaction with NBN. HEAT repeat units lie at residues 16-53 (SSNV…MELR), 55-99 (MSQE…VEGG), 100-137 (NSTR…AMAG), 138-179 (DTFT…AISV), 180-220 (PTFF…LILT), 222-276 (QREP…RISS), 277-313 (MEGE…PRHI), 314-364 (TPFT…CCRD), 365-409 (LMEE…AFTD), 410-445 (TQYL…VAVR), 446-494 (SEFK…RAMG), 495-529 (PGIQ…RQIP), 530-563 (QLKK…GLAH), 564-596 (QLAS…EFEG), 597-636 (HSLT…SIHL), 637-683 (ISGH…DERF), 686-724 (HLAQ…MNPA), 727-766 (MPFL…NAPR), 769-811 (RPYM…VSGL), 814-853 (RKWV…STGY), 857-893 (PYRK…LLGA), 894-942 (LDPY…GNLP), 943-988 (LDEF…KCVQ), 989-1027 (FLPQ…KSHI), 1029-1068 (PYMD…GEFK), 1069-1105 (LYLP…LFGA), 1106-1144 (NLDD…RLTE), 1145-1188 (SLDF…GKKY), 1189-1225 (QIFI…LADE), 1226-1273 (EEDP…GAAR), 1274-1311 (RVSK…QAYN), and 1312-1345 (PMAR…ELAL). S567 bears the Phosphoserine mark. At T1162 the chain carries Phosphothreonine. K1218 is modified (N6-acetyllysine). S1261 carries the phosphoserine modification. TPR repeat units follow at residues 1346 to 1382 (TSQD…GIVL), 1383 to 1408 (LGER…QKGP), 1409 to 1442 (TPAI…HFGE), 1443 to 1473 (LEIQ…NKDD), 1474 to 1507 (PELM…VNDE), 1508 to 1541 (TQAK…RDTH), 1542 to 1574 (DGAF…LDAE), 1575 to 1614 (LTAM…RREI), 1615 to 1649 (IRQI…PHED), 1650 to 1693 (MRTW…PTVH), 1694 to 1731 (PQVT…AQHA), 1732 to 1786 (IATE…DRSW), 1787 to 1846 (YKAW…STEG), 1898 to 1930 (NNLQ…VKAI), 1931 to 1970 (QIDT…YHPQ), and 1971 to 2005 (ALIY…SNTL). The 601-residue stretch at 1382–1982 (LLGERAAKCR…IYPLTVASKS (601 aa)) folds into the FAT domain. 1D-myo-inositol hexakisphosphate contacts are provided by K1662, K1702, and R1749. Residues 1812-1867 (DEKKKLRHASGANITNATTTATTAASAAAATSTEGSNSESEAESNESSPTPSPLQK) are disordered. The span at 1826–1860 (TNATTTATTAASAAAATSTEGSNSESEAESNESSP) shows a compositional bias: low complexity. The interval 2012 to 2144 (VSEELIRVAI…DLELAVPGTY (133 aa)) is sufficient for interaction with the FKBP1A/rapamycin complex. Residue K2066 forms a Glycyl lysine isopeptide (Lys-Gly) (interchain with G-Cter in ubiquitin) linkage. The region spanning 2156 to 2469 (IAPSLQVITS…GVELGEPAHK (314 aa)) is the PI3K/PI4K catalytic domain. A Phosphoserine modification is found at S2159. The interval 2162-2168 (VITSKQR) is G-loop. Phosphothreonine is present on T2164. The ATP site is built by S2165 and Q2167. At T2173 the chain carries Phosphothreonine; by PKB/AKT1. Positions 2185, 2187, 2190, 2225, 2238, 2239, 2240, and 2245 each coordinate ATP. The tract at residues 2258 to 2296 (KILLNIEHRIMLRMAPDYDHLTLMQKVEVFEHAVNNTAG) is interaction with MLST8. The tract at residues 2335 to 2343 (GLGDRHPSN) is catalytic loop. N2343 is a Mg(2+) binding site. The ATP site is built by M2345 and I2356. Residues 2355-2380 (HIDFGDCFEVAMTREKFPEKIPFRLT) are activation loop. Residue D2357 coordinates Mg(2+). Position 2446 is a phosphothreonine; by RPS6KB1 (T2446). The residue at position 2448 (S2448) is a Phosphoserine; by RPS6KB1. S2478 is modified (phosphoserine). Phosphoserine; by autocatalysis is present on S2481. The 33-residue stretch at 2517 to 2549 (DTLDVPTQVELLIKQATSHENLCQCYIGWCPFW) folds into the FATC domain.

It belongs to the PI3/PI4-kinase family. As to quaternary structure, part of the mechanistic target of rapamycin complex 1 (mTORC1) which contains MTOR, MLST8 and RPTOR. The mTORC1 complex is a 1 Md obligate dimer of two stoichiometric heterotetramers with overall dimensions of 290 A x 210 A x 135 A. It has a rhomboid shape and a central cavity, the dimeric interfaces are formed by interlocking interactions between the two MTOR and the two RPTOR subunits. The MLST8 subunit forms distal foot-like protuberances, and contacts only one MTOR within the complex, while the small AKT1S1/PRAS40 localizes to the midsection of the central core, in close proximity to RPTOR. mTORC1 associates with AKT1S1/PRAS40, which inhibits its activity by blocking MTOR substrate-recruitment site. Component of the mechanistic target of rapamycin complex 2 (mTORC2), consisting in two heterotretramers composed of MTOR, MLST8, RICTOR and MAPKAP1/SIN1. Interacts with PLPP7 and PML. Interacts with PRR5 and RICTOR; the interaction is direct within the mTORC2 complex and interaction with RICTOR is enhanced by deubiquitination of RICTOR by USP9X. mTORC1 and mTORC2 associate with DEPTOR, which regulates their activity. Interacts with WAC; WAC positively regulates MTOR activity by promoting the assembly of the TTT complex composed of TELO2, TTI1 and TTI2 and the RUVBL complex composed of RUVBL1 and RUVBL2 into the TTT-RUVBL complex which leads to the dimerization of the mTORC1 complex and its subsequent activation. Interacts with UBQLN1. Interacts with TTI1 and TELO2. Interacts with CLIP1; phosphorylates and regulates CLIP1. Interacts with NBN. Interacts with HTR6. Interacts with BRAT1. Interacts with MEAK7 (via C-terminal domain); the interaction increases upon nutrient stimulation. Interacts with TM4SF5; the interaction is positively regulated by arginine and is negatively regulated by leucine. Interacts with GPR137B. Interacts with NCKAP1L. Interacts with TPCN1 and TPCN2; the interaction is required for TPCN1 and TPCN2 sensitivity to ATP. Interacts with ATP6V1A and with CRYAB, forming a ternary complex. Interacts with SLC38A7; this interaction mediates the recruitment of mTORC1 to the lysosome and its subsequent activation. Interacts with TSPAN8. In terms of processing, autophosphorylates when part of mTORC1 or mTORC2. Phosphorylation at Ser-1261, Ser-2159 and Thr-2164 promotes autophosphorylation. Phosphorylated at Ser-2448 by RPS6KB1. Phosphorylation in the kinase domain modulates the interactions of MTOR with RPTOR and AKT1S1/PRAS40 and leads to increased intrinsic mTORC1 kinase activity. Phosphorylation at Ser-2159 by TBK1 in response to growth factors and pathogen recognition receptors promotes mTORC1 activity. Phosphorylation at Ser-2159 by TBK1 in response to EGF growth factor promotes mTORC2 activity, leading to AKT1 phosphorylation and activation. Phosphorylation at Thr-2173 in the ATP-binding region by AKT1 strongly reduces kinase activity. Post-translationally, ubiquitinated at Lys-2066 by the SCF(FBXO22) complex via 'Lys-27'-linked ubiquitination prevents mTORC1 substrate recruitment.

The protein localises to the lysosome membrane. It is found in the endoplasmic reticulum membrane. Its subcellular location is the golgi apparatus membrane. It localises to the cell membrane. The protein resides in the mitochondrion outer membrane. The protein localises to the cytoplasm. It is found in the nucleus. Its subcellular location is the PML body. It localises to the microsome membrane. The protein resides in the cytoplasmic vesicle. The protein localises to the phagosome. The enzyme catalyses L-seryl-[protein] + ATP = O-phospho-L-seryl-[protein] + ADP + H(+). It catalyses the reaction L-threonyl-[protein] + ATP = O-phospho-L-threonyl-[protein] + ADP + H(+). It carries out the reaction L-tyrosyl-[protein] + ATP = O-phospho-L-tyrosyl-[protein] + ADP + H(+). Its activity is regulated as follows. The mTORC1 complex is activated in response to nutrients, growth factors or amino acids: activation requires relocalization of the mTORC1 complex to lysosomes that is mediated by the Ragulator complex, SLC38A9, and the Rag GTPases RagA/RRAGA, RagB/RRAGB, RagC/RRAGC and RagD/RRAGD. Activation of mTORC1 by growth factors such as insulin involves AKT1-mediated phosphorylation of TSC1-TSC2, which leads to the activation of the RHEB GTPase a potent activator of the protein kinase activity of mTORC1. Insulin-stimulated and amino acid-dependent phosphorylation at Ser-1261 promotes autophosphorylation and the activation of mTORC1. On the other hand, low cellular energy levels can inhibit mTORC1 through activation of PRKAA1 while hypoxia inhibits mTORC1 through a REDD1-dependent mechanism which may also require PRKAA1. The kinase activity of MTOR within the mTORC1 complex is positively regulated by MLST8. The kinase activity of MTOR is inhibited by DEPTOR and AKT1S1. The non-canonical mTORC1 complex is independent of the RHEB GTPase and specifically mediates phosphorylation of MiT/TFE factors TFEB and TFE3 but not other mTORC1 substrates: it is activated by FLCN, which activates Rag GTPases RagC/RRAGC and RagD/RRAGD. MTOR is the target of the immunosuppressive and anti-cancer drug rapamycin which acts in complex with FKBP1A/FKBP12, and specifically inhibits its kinase activity. mTORC2 is also activated by growth factors, but seems to be nutrient-insensitive. mTORC2 associates and is directly activated by ribosomes. mTORC2 may also be regulated by RHEB but in an indirect manner through the PI3K signaling pathway. Serine/threonine protein kinase which is a central regulator of cellular metabolism, growth and survival in response to hormones, growth factors, nutrients, energy and stress signals. MTOR directly or indirectly regulates the phosphorylation of at least 800 proteins. Functions as part of 2 structurally and functionally distinct signaling complexes mTORC1 and mTORC2 (mTOR complex 1 and 2). In response to nutrients, growth factors or amino acids, mTORC1 is recruited to the lysosome membrane and promotes protein, lipid and nucleotide synthesis by phosphorylating key regulators of mRNA translation and ribosome synthesis. This includes phosphorylation of EIF4EBP1 and release of its inhibition toward the elongation initiation factor 4E (eiF4E). Moreover, phosphorylates and activates RPS6KB1 and RPS6KB2 that promote protein synthesis by modulating the activity of their downstream targets including ribosomal protein S6, eukaryotic translation initiation factor EIF4B, and the inhibitor of translation initiation PDCD4. Stimulates the pyrimidine biosynthesis pathway, both by acute regulation through RPS6KB1-mediated phosphorylation of the biosynthetic enzyme CAD, and delayed regulation, through transcriptional enhancement of the pentose phosphate pathway which produces 5-phosphoribosyl-1-pyrophosphate (PRPP), an allosteric activator of CAD at a later step in synthesis, this function is dependent on the mTORC1 complex. Regulates ribosome synthesis by activating RNA polymerase III-dependent transcription through phosphorylation and inhibition of MAF1 an RNA polymerase III-repressor. Activates dormant ribosomes by mediating phosphorylation of SERBP1, leading to SERBP1 inactivation and reactivation of translation. In parallel to protein synthesis, also regulates lipid synthesis through SREBF1/SREBP1 and LPIN1. To maintain energy homeostasis mTORC1 may also regulate mitochondrial biogenesis through regulation of PPARGC1A. In the same time, mTORC1 inhibits catabolic pathways: negatively regulates autophagy through phosphorylation of ULK1. Under nutrient sufficiency, phosphorylates ULK1 at 'Ser-758', disrupting the interaction with AMPK and preventing activation of ULK1. Also prevents autophagy through phosphorylation of the autophagy inhibitor DAP. Also prevents autophagy by phosphorylating RUBCNL/Pacer under nutrient-rich conditions. Prevents autophagy by mediating phosphorylation of AMBRA1, thereby inhibiting AMBRA1 ability to mediate ubiquitination of ULK1 and interaction between AMBRA1 and PPP2CA. mTORC1 exerts a feedback control on upstream growth factor signaling that includes phosphorylation and activation of GRB10 a INSR-dependent signaling suppressor. Among other potential targets mTORC1 may phosphorylate CLIP1 and regulate microtubules. The mTORC1 complex is inhibited in response to starvation and amino acid depletion. The non-canonical mTORC1 complex, which acts independently of RHEB, specifically mediates phosphorylation of MiT/TFE factors TFEB and TFE3 in the presence of nutrients, promoting their cytosolic retention and inactivation. Upon starvation or lysosomal stress, inhibition of mTORC1 induces dephosphorylation and nuclear translocation of TFEB and TFE3, promoting their transcription factor activity. The mTORC1 complex regulates pyroptosis in macrophages by promoting GSDMD oligomerization. MTOR phosphorylates RPTOR which in turn inhibits mTORC1. As part of the mTORC2 complex, MTOR transduces signals from growth factors to pathways involved in proliferation, cytoskeletal organization, lipogenesis and anabolic output. In response to growth factors, mTORC2 phosphorylates and activates AGC protein kinase family members, including AKT (AKT1, AKT2 and AKT3), PKC (PRKCA, PRKCB and PRKCE) and SGK1. In contrast to mTORC1, mTORC2 is nutrient-insensitive. mTORC2 plays a critical role in AKT1 activation by mediating phosphorylation of different sites depending on the context, such as 'Thr-450', 'Ser-473', 'Ser-477' or 'Thr-479', facilitating the phosphorylation of the activation loop of AKT1 on 'Thr-308' by PDPK1/PDK1 which is a prerequisite for full activation. mTORC2 also regulates the phosphorylation of SGK1 at 'Ser-422'. mTORC2 may regulate the actin cytoskeleton, through phosphorylation of PRKCA, PXN and activation of the Rho-type guanine nucleotide exchange factors RHOA and RAC1A or RAC1B. The mTORC2 complex also phosphorylates various proteins involved in insulin signaling, such as FBXW8 and IGF2BP1. May also regulate insulin signaling by acting as a tyrosine protein kinase that catalyzes phosphorylation of IGF1R and INSR. Regulates osteoclastogenesis by adjusting the expression of CEBPB isoforms. Plays an important regulatory role in the circadian clock function; regulates period length and rhythm amplitude of the suprachiasmatic nucleus (SCN) and liver clocks. This chain is Serine/threonine-protein kinase mTOR, found in Rattus norvegicus (Rat).